A 483-amino-acid chain; its full sequence is UDP-N-acetylmuramyl-tripeptide synthetase (483 aa).

Ser-43 lines the UDP-N-acetyl-alpha-D-muramoyl-L-alanyl-D-glutamate pocket. 116–122 contributes to the ATP binding site; the sequence is GTKGKTT. UDP-N-acetyl-alpha-D-muramoyl-L-alanyl-D-glutamate-binding positions include 160–161, Ser-187, and Arg-195; that span reads TT. An N6-carboxylysine modification is found at Lys-229.

Belongs to the MurCDEF family. MurE subfamily. Post-translationally, carboxylation is probably crucial for Mg(2+) binding and, consequently, for the gamma-phosphate positioning of ATP.

It is found in the cytoplasm. The protein operates within cell wall biogenesis; peptidoglycan biosynthesis. Its function is as follows. Catalyzes the addition of an amino acid to the nucleotide precursor UDP-N-acetylmuramoyl-L-alanyl-D-glutamate (UMAG) in the biosynthesis of bacterial cell-wall peptidoglycan. The protein is UDP-N-acetylmuramyl-tripeptide synthetase of Lactococcus lactis subsp. cremoris (strain SK11).